The sequence spans 132 residues: Small ribosomal subunit protein uS8 (132 aa).

It belongs to the universal ribosomal protein uS8 family. In terms of assembly, part of the 30S ribosomal subunit. Contacts proteins S5 and S12.

Functionally, one of the primary rRNA binding proteins, it binds directly to 16S rRNA central domain where it helps coordinate assembly of the platform of the 30S subunit. This Pediococcus pentosaceus (strain ATCC 25745 / CCUG 21536 / LMG 10740 / 183-1w) protein is Small ribosomal subunit protein uS8.